Consider the following 557-residue polypeptide: Eudesmanediol synthase (557 aa).

Aspartate 310 and aspartate 314 together coordinate Mg(2+). Positions 310, 314, 450, and 453 each coordinate substrate. A DDXXD motif motif is present at residues aspartate 310–aspartate 314. Asparagine 453 and serine 457 together coordinate Mg(2+).

It belongs to the terpene synthase family. As to quaternary structure, monomer. It depends on Mg(2+) as a cofactor. Requires Mn(2+) as cofactor. As to expression, specifically expressed in roots.

The protein localises to the cytoplasm. It carries out the reaction (2E,6E)-farnesyl diphosphate + 2 H2O = 7-epi-ent-eudesmane-5,11-diol + diphosphate. It participates in secondary metabolite biosynthesis; terpenoid biosynthesis. Its function is as follows. Component of the volatile terpenes biosynthesis pathways. Dihydroxylated sesquiterpenoid synthase that generates dually hydroxylated products directly from (E,E)-farnesyl diphosphate, primarily eudesmane-2,11-diol, along with two closely related structural isomers. The sequence is that of Eudesmanediol synthase from Zea mays (Maize).